The primary structure comprises 619 residues: Chaperone protein HscA homolog (619 aa).

It belongs to the heat shock protein 70 family.

Its function is as follows. Chaperone involved in the maturation of iron-sulfur cluster-containing proteins. Has a low intrinsic ATPase activity which is markedly stimulated by HscB. The chain is Chaperone protein HscA homolog from Acinetobacter baumannii (strain ACICU).